The primary structure comprises 226 residues: Biosynthetic peptidoglycan transglycosylase (226 aa).

A helical transmembrane segment spans residues 10 to 30; it reads IIMTLLALLILPYLLIPVYAL.

Belongs to the glycosyltransferase 51 family.

It is found in the cell inner membrane. It catalyses the reaction [GlcNAc-(1-&gt;4)-Mur2Ac(oyl-L-Ala-gamma-D-Glu-L-Lys-D-Ala-D-Ala)](n)-di-trans,octa-cis-undecaprenyl diphosphate + beta-D-GlcNAc-(1-&gt;4)-Mur2Ac(oyl-L-Ala-gamma-D-Glu-L-Lys-D-Ala-D-Ala)-di-trans,octa-cis-undecaprenyl diphosphate = [GlcNAc-(1-&gt;4)-Mur2Ac(oyl-L-Ala-gamma-D-Glu-L-Lys-D-Ala-D-Ala)](n+1)-di-trans,octa-cis-undecaprenyl diphosphate + di-trans,octa-cis-undecaprenyl diphosphate + H(+). It functions in the pathway cell wall biogenesis; peptidoglycan biosynthesis. Peptidoglycan polymerase that catalyzes glycan chain elongation from lipid-linked precursors. The protein is Biosynthetic peptidoglycan transglycosylase of Agrobacterium fabrum (strain C58 / ATCC 33970) (Agrobacterium tumefaciens (strain C58)).